Consider the following 440-residue polypeptide: Proton extrusion protein PxcA (440 aa).

A run of 4 helical transmembrane segments spans residues 222 to 242, 316 to 336, 352 to 374, and 400 to 420; these read FVLTLIIVPLLAHQLTKTFFL, NAIANIFADIFSLVAFSLVLV, IVYGLSDSAKAFLIILFTDMFVG, and FNFLFIATFPVILDTVFKYWI.

This sequence belongs to the CemA family.

The protein localises to the cell inner membrane. Required for H(+) efflux immediately after light irradiation to form a rapid H(+) concentration gradient across the thylakoid membranes. Together with PxcL, contributes to transient H(+) uptake following dark to light transition. Involved in light-induced Na(+)-dependent proton extrusion. Also seems to be involved in CO(2) transport. In Synechocystis sp. (strain ATCC 27184 / PCC 6803 / Kazusa), this protein is Proton extrusion protein PxcA.